The chain runs to 135 residues: ATP synthase epsilon chain 1 (135 aa).

It belongs to the ATPase epsilon chain family. In terms of assembly, F-type ATPases have 2 components, CF(1) - the catalytic core - and CF(0) - the membrane proton channel. CF(1) has five subunits: alpha(3), beta(3), gamma(1), delta(1), epsilon(1). CF(0) has three main subunits: a, b and c.

It is found in the cell inner membrane. Functionally, produces ATP from ADP in the presence of a proton gradient across the membrane. The protein is ATP synthase epsilon chain 1 of Nitrobacter hamburgensis (strain DSM 10229 / NCIMB 13809 / X14).